Here is a 269-residue protein sequence, read N- to C-terminus: Probable ribosomal RNA small subunit methyltransferase A (269 aa).

S-adenosyl-L-methionine is bound by residues H23, L25, G50, E71, D95, and N110.

Belongs to the class I-like SAM-binding methyltransferase superfamily. rRNA adenine N(6)-methyltransferase family. RsmA subfamily.

It localises to the cytoplasm. Specifically dimethylates two adjacent adenosines in the loop of a conserved hairpin near the 3'-end of 16S rRNA in the 30S particle. May play a critical role in biogenesis of 30S subunits. The polypeptide is Probable ribosomal RNA small subunit methyltransferase A (Pyrococcus abyssi (strain GE5 / Orsay)).